The chain runs to 947 residues: Translation initiation factor IF-2 (947 aa).

The disordered stretch occupies residues 61-284 (IQANQPAKNP…TAKNNKSHKI (224 aa)). A compositionally biased stretch (basic and acidic residues) spans 151-169 (QIEKAKQKLQEIQKSREAL). Residues 175 to 188 (SNANNANSTNNANN) are compositionally biased toward low complexity. Basic and acidic residues predominate over residues 189–206 (AKKEISEVKKQEQEIKRH). Basic residues predominate over residues 207 to 218 (ENIKRRTGFRVI). Residues 247-262 (EDIKKEWQEKDKQEAK) show a composition bias toward basic and acidic residues. The region spanning 446-615 (ERPPVVTIMG…LIQADIMELK (170 aa)) is the tr-type G domain. Residues 455–462 (GHVDHGKT) form a G1 region. A GTP-binding site is contributed by 455-462 (GHVDHGKT). The G2 stretch occupies residues 480–484 (GITQH). A G3 region spans residues 501-504 (DTPG). Residues 501–505 (DTPGH) and 555–558 (NKMD) each bind GTP. The G4 stretch occupies residues 555 to 558 (NKMD). Residues 591-593 (SAK) form a G5 region.

It belongs to the TRAFAC class translation factor GTPase superfamily. Classic translation factor GTPase family. IF-2 subfamily.

It localises to the cytoplasm. Its function is as follows. One of the essential components for the initiation of protein synthesis. Protects formylmethionyl-tRNA from spontaneous hydrolysis and promotes its binding to the 30S ribosomal subunits. Also involved in the hydrolysis of GTP during the formation of the 70S ribosomal complex. This Helicobacter pylori (strain P12) protein is Translation initiation factor IF-2.